The following is a 239-amino-acid chain: Proteasome activator complex subunit 2 (239 aa).

Ala-2 is modified (N-acetylalanine). Residue Ser-10 is modified to Phosphoserine. The segment at 65 to 86 (DIPIPDPPPKDDEMETDKQEKK) is disordered. Residues 72-86 (PPKDDEMETDKQEKK) are compositionally biased toward basic and acidic residues.

It belongs to the PA28 family. As to quaternary structure, heterodimer of PSME1 and PSME2, which forms a hexameric ring.

In terms of biological role, implicated in immunoproteasome assembly and required for efficient antigen processing. The PA28 activator complex enhances the generation of class I binding peptides by altering the cleavage pattern of the proteasome. The protein is Proteasome activator complex subunit 2 (PSME2) of Bos taurus (Bovine).